The sequence spans 72 residues: AERLDENSPEALALNYKHDGASVDHPSHAAGQKCINCLLYTDPSATEWGGCAVFPNKLVNANGWCTAYVARG.

[4Fe-4S] cluster-binding residues include Cys-34, Cys-37, Cys-51, and Cys-65.

This sequence belongs to the high-potential iron-sulfur protein (HiPIP) family. As to quaternary structure, homodimer.

In terms of biological role, specific class of high-redox-potential 4Fe-4S ferredoxins. Functions in anaerobic electron transport in most purple and in some other photosynthetic bacteria and in at least one genus (Paracoccus) of halophilic, denitrifying bacteria. The polypeptide is High-potential iron-sulfur protein isozyme 1 (hip1) (Ectothiorhodospira shaposhnikovii (Ectothiorhodospira vacuolata)).